The primary structure comprises 96 residues: MKLLQVLLVLLFVALADGAQPKRCFSNVEGYCRKKCRLVEISEMGCLHGKYCCVNELENKKHKKHSVVEETVKLQDKSKVQDYMILPTVTYYTISI.

A signal peptide spans 1–21; the sequence is MKLLQVLLVLLFVALADGAQP. Disulfide bonds link C24–C52, C32–C46, and C36–C53.

It belongs to the beta-defensin family.

It is found in the secreted. Functionally, has antibacterial activity. The chain is Beta-defensin 20 (Defb20) from Mus musculus (Mouse).